We begin with the raw amino-acid sequence, 147 residues long: Hemoglobin subunit gamma (147 aa).

The Globin domain maps to 3–147; the sequence is HFTAEEKAII…VAIALGHKYH (145 aa). Residues histidine 64 and histidine 93 each coordinate heme b.

This sequence belongs to the globin family. In terms of assembly, heterotetramer of two alpha chains and two gamma chains in fetal hemoglobin (Hb F). Red blood cells.

Its function is as follows. Gamma chains make up the fetal hemoglobin F, in combination with alpha chains. This chain is Hemoglobin subunit gamma (HBG), found in Cephalopachus bancanus (Western tarsier).